Consider the following 147-residue polypeptide: Peroxynitrite isomerase (147 aa).

H137 provides a ligand contact to heme b.

It belongs to the nitrobindin family. As to quaternary structure, homodimer. Heme b is required as a cofactor.

The catalysed reaction is peroxynitrite = nitrate. It functions in the pathway nitrogen metabolism. Functionally, heme-binding protein able to scavenge peroxynitrite and to protect free L-tyrosine against peroxynitrite-mediated nitration, by acting as a peroxynitrite isomerase that converts peroxynitrite to nitrate. Therefore, this protein likely plays a role in peroxynitrite sensing and in the detoxification of reactive nitrogen and oxygen species (RNS and ROS, respectively). Is able to bind nitric oxide (NO) in vitro, but may act as a sensor of peroxynitrite levels in vivo. This is Peroxynitrite isomerase from Frankia alni (strain DSM 45986 / CECT 9034 / ACN14a).